Here is a 251-residue protein sequence, read N- to C-terminus: Capsid protein (251 aa).

Residues 3-20 (KRDAPWRLTAGTAKISRT) carry the Bipartite nuclear localization signal motif. The short motif at 35-49 (RASAWVNRPMYRKPR) is the Nuclear localization signal element. Residues 63–80 (CEGPCKVQSFEQRHDVSH) fold into a zinc finger. The Nuclear export signal motif lies at 96–117 (ITHRVGKRFCVKSVYILGKIWM). Positions 195–242 (RRFWKVNNHVVYNHQEAGKYENHTENALLLYMACTHASNPVYATLKIR) match the Bipartite nuclear localization signal motif.

This sequence belongs to the geminiviridae capsid protein family. Homomultimer. Binds to single-stranded and double-stranded viral DNA. Interacts (via nuclear localization signals) with host importin alpha-1a.

The protein resides in the virion. The protein localises to the host nucleus. Its function is as follows. Encapsidates the viral DNA into characteristic twinned ('geminate') particles. Binds the genomic viral ssDNA and shuttles it into and out of the cell nucleus. The CP of bipartite geminiviruses is not required for cell-to-cell or systemic movement. This is Capsid protein from Capsicum annuum (Capsicum pepper).